A 639-amino-acid chain; its full sequence is Chaperone protein DnaK (639 aa).

Thr198 is modified (phosphothreonine; by autocatalysis). The interval 604–639 (KSQAQGGDNADAGKQANAAADDVVDAEFEEVKDDKK) is disordered. Positions 606–624 (QAQGGDNADAGKQANAAAD) are enriched in low complexity. The segment covering 625–639 (DVVDAEFEEVKDDKK) has biased composition (acidic residues).

The protein belongs to the heat shock protein 70 family.

Functionally, acts as a chaperone. The polypeptide is Chaperone protein DnaK (Shewanella baltica (strain OS223)).